Here is a 1081-residue protein sequence, read N- to C-terminus: Carbamoyl phosphate synthase large chain (1081 aa).

Positions 1–403 are carboxyphosphate synthetic domain; the sequence is MPRRNDLNKI…SFQKALRSLE (403 aa). ATP is bound by residues Arg-129, Arg-170, Gly-177, Lys-209, Leu-211, Glu-216, Gly-242, Val-243, His-244, Gln-286, and Glu-300. Positions 133-329 constitute an ATP-grasp 1 domain; the sequence is KEAMARIGVP…IAKFAAKLAV (197 aa). Mg(2+) contacts are provided by Gln-286, Glu-300, and Asn-302. Mn(2+)-binding residues include Gln-286, Glu-300, and Asn-302. The interval 404 to 553 is oligomerization domain; that stretch reads TGRFGFGCDR…STYEPEECEV (150 aa). The carbamoyl phosphate synthetic domain stretch occupies residues 554 to 944; it reads LPSDKPKVMI…AFAKAELGAG (391 aa). The 193-residue stretch at 686–878 folds into the ATP-grasp 2 domain; that stretch reads EKILHELEIS…LAKIASLVMS (193 aa). Residues Arg-722, Lys-761, Leu-763, Glu-768, Gly-794, Ile-795, His-796, Ser-797, Gln-837, and Glu-849 each contribute to the ATP site. Gln-837, Glu-849, and Asn-851 together coordinate Mg(2+). 3 residues coordinate Mn(2+): Gln-837, Glu-849, and Asn-851. In terms of domain architecture, MGS-like spans 945–1081; it reads VILATTGTVF…DVKALQDYLG (137 aa). The allosteric domain stretch occupies residues 945–1081; that stretch reads VILATTGTVF…DVKALQDYLG (137 aa).

This sequence belongs to the CarB family. As to quaternary structure, composed of two chains; the small (or glutamine) chain promotes the hydrolysis of glutamine to ammonia, which is used by the large (or ammonia) chain to synthesize carbamoyl phosphate. Tetramer of heterodimers (alpha,beta)4. Mg(2+) is required as a cofactor. It depends on Mn(2+) as a cofactor.

It carries out the reaction hydrogencarbonate + L-glutamine + 2 ATP + H2O = carbamoyl phosphate + L-glutamate + 2 ADP + phosphate + 2 H(+). It catalyses the reaction hydrogencarbonate + NH4(+) + 2 ATP = carbamoyl phosphate + 2 ADP + phosphate + 2 H(+). Its pathway is amino-acid biosynthesis; L-arginine biosynthesis; carbamoyl phosphate from bicarbonate: step 1/1. It participates in pyrimidine metabolism; UMP biosynthesis via de novo pathway; (S)-dihydroorotate from bicarbonate: step 1/3. In terms of biological role, large subunit of the glutamine-dependent carbamoyl phosphate synthetase (CPSase). CPSase catalyzes the formation of carbamoyl phosphate from the ammonia moiety of glutamine, carbonate, and phosphate donated by ATP, constituting the first step of 2 biosynthetic pathways, one leading to arginine and/or urea and the other to pyrimidine nucleotides. The large subunit (synthetase) binds the substrates ammonia (free or transferred from glutamine from the small subunit), hydrogencarbonate and ATP and carries out an ATP-coupled ligase reaction, activating hydrogencarbonate by forming carboxy phosphate which reacts with ammonia to form carbamoyl phosphate. In Synechocystis sp. (strain ATCC 27184 / PCC 6803 / Kazusa), this protein is Carbamoyl phosphate synthase large chain.